Consider the following 362-residue polypeptide: Probable dual-specificity RNA methyltransferase RlmN (362 aa).

Residue E105 is the Proton acceptor of the active site. The region spanning 111 to 344 (HEYGNSICVT…VTIRREQGHD (234 aa)) is the Radical SAM core domain. C118 and C349 form a disulfide bridge. Residues C125, C129, and C132 each coordinate [4Fe-4S] cluster. Residues 175 to 176 (GE), S207, 230 to 232 (SLH), and N306 each bind S-adenosyl-L-methionine. C349 (S-methylcysteine intermediate) is an active-site residue.

The protein belongs to the radical SAM superfamily. RlmN family. [4Fe-4S] cluster is required as a cofactor.

Its subcellular location is the cytoplasm. It catalyses the reaction adenosine(2503) in 23S rRNA + 2 reduced [2Fe-2S]-[ferredoxin] + 2 S-adenosyl-L-methionine = 2-methyladenosine(2503) in 23S rRNA + 5'-deoxyadenosine + L-methionine + 2 oxidized [2Fe-2S]-[ferredoxin] + S-adenosyl-L-homocysteine. The catalysed reaction is adenosine(37) in tRNA + 2 reduced [2Fe-2S]-[ferredoxin] + 2 S-adenosyl-L-methionine = 2-methyladenosine(37) in tRNA + 5'-deoxyadenosine + L-methionine + 2 oxidized [2Fe-2S]-[ferredoxin] + S-adenosyl-L-homocysteine. Functionally, specifically methylates position 2 of adenine 2503 in 23S rRNA and position 2 of adenine 37 in tRNAs. The protein is Probable dual-specificity RNA methyltransferase RlmN of Bacillus cereus (strain B4264).